A 195-amino-acid polypeptide reads, in one-letter code: MRTAELKRETKETKIDIQLNLDGTGESSIQTGVGFFDHMLTLLAFHSQMDLHVKVEGDTWVDAHHTVEDVGIALGQLIVKSLGDKVGIRRYGSSYMPMDETLARAVIDVSGRPFLVYQADIRNPKLGDFDTELAEEFFRAVAMNGRLTLHLAVLYGSNSHHMIEGLFKAFGRALAEAVSSDGTNRLPSTKGWIEG.

Belongs to the imidazoleglycerol-phosphate dehydratase family.

Its subcellular location is the cytoplasm. It carries out the reaction D-erythro-1-(imidazol-4-yl)glycerol 3-phosphate = 3-(imidazol-4-yl)-2-oxopropyl phosphate + H2O. The protein operates within amino-acid biosynthesis; L-histidine biosynthesis; L-histidine from 5-phospho-alpha-D-ribose 1-diphosphate: step 6/9. The chain is Imidazoleglycerol-phosphate dehydratase from Exiguobacterium sp. (strain ATCC BAA-1283 / AT1b).